The chain runs to 75 residues: OcyC3 (75 aa).

The signal sequence occupies residues 1-22 (MQYKTFLVISLAYLLVADEAAA). Positions 51–75 (EINNVFEPYHENLDLELERFLSQLQ) are excised as a propeptide.

As to expression, expressed by the venom gland.

The protein localises to the secreted. The protein resides in the target cell membrane. In terms of biological role, amphipathic peptide with probable antimicrobial activity. May act by disrupting the integrity of the bacterial cell membrane. This Opisthacanthus cayaporum (South American scorpion) protein is OcyC3.